Consider the following 266-residue polypeptide: uncharacterized protein (266 aa).

A run of 4 helical transmembrane segments spans residues 9-29 (IFIIFLSFLMIVLSITSIELP), 79-99 (GIMTCMGINILSLVIILINPF), 122-142 (LSVMIVIFYILSTTIGLMLSG), and 193-213 (GWYLSIVLLFLSLILAVMVFI).

It is found in the membrane. This is an uncharacterized protein from Dictyostelium discoideum (Social amoeba).